The sequence spans 420 residues: Glutamyl-tRNA reductase (420 aa).

Substrate is bound by residues 49-52, S107, 112-114, and Q118; these read TCNR and EPQ. C50 functions as the Nucleophile in the catalytic mechanism. 187–192 contributes to the NADP(+) binding site; sequence GAGETI.

The protein belongs to the glutamyl-tRNA reductase family. In terms of assembly, homodimer.

The enzyme catalyses (S)-4-amino-5-oxopentanoate + tRNA(Glu) + NADP(+) = L-glutamyl-tRNA(Glu) + NADPH + H(+). It participates in porphyrin-containing compound metabolism; protoporphyrin-IX biosynthesis; 5-aminolevulinate from L-glutamyl-tRNA(Glu): step 1/2. Its function is as follows. Catalyzes the NADPH-dependent reduction of glutamyl-tRNA(Glu) to glutamate 1-semialdehyde (GSA). The sequence is that of Glutamyl-tRNA reductase from Methylococcus capsulatus (strain ATCC 33009 / NCIMB 11132 / Bath).